We begin with the raw amino-acid sequence, 201 residues long: Dephospho-CoA kinase (201 aa).

The DPCK domain maps to 4-201; the sequence is SVGLTGNIAS…KYLREAKIKQ (198 aa). 12 to 17 provides a ligand contact to ATP; sequence ASGKST.

Belongs to the CoaE family.

Its subcellular location is the cytoplasm. The enzyme catalyses 3'-dephospho-CoA + ATP = ADP + CoA + H(+). The protein operates within cofactor biosynthesis; coenzyme A biosynthesis; CoA from (R)-pantothenate: step 5/5. Catalyzes the phosphorylation of the 3'-hydroxyl group of dephosphocoenzyme A to form coenzyme A. The sequence is that of Dephospho-CoA kinase from Legionella pneumophila (strain Paris).